The primary structure comprises 444 residues: Tol-Pal system protein TolB (444 aa).

An N-terminal signal peptide occupies residues Met1–Ala19.

It belongs to the TolB family. In terms of assembly, the Tol-Pal system is composed of five core proteins: the inner membrane proteins TolA, TolQ and TolR, the periplasmic protein TolB and the outer membrane protein Pal. They form a network linking the inner and outer membranes and the peptidoglycan layer.

Its subcellular location is the periplasm. Its function is as follows. Part of the Tol-Pal system, which plays a role in outer membrane invagination during cell division and is important for maintaining outer membrane integrity. This Rickettsia rickettsii (strain Iowa) protein is Tol-Pal system protein TolB.